We begin with the raw amino-acid sequence, 120 residues long: Small ribosomal subunit protein eS25 (120 aa).

Positions 1–32 are disordered; it reads MPPKAGQTKKAKMEAANKGAKKTTKKWSKGQS. A compositionally biased stretch (basic residues) spans 19–28; that stretch reads GAKKTTKKWS.

This sequence belongs to the eukaryotic ribosomal protein eS25 family.

This chain is Small ribosomal subunit protein eS25 (RPS25), found in Leishmania infantum.